Consider the following 412-residue polypeptide: D-nopaline dehydrogenase (412 aa).

Belongs to the lysopine/nopaline/octopine/opine/vitopine dehydrogenases family. Homotetramer.

It carries out the reaction D-nopaline + NADP(+) + H2O = L-arginine + 2-oxoglutarate + NADPH + H(+). In Agrobacterium vitis (Rhizobium vitis), this protein is D-nopaline dehydrogenase (nos).